Here is a 201-residue protein sequence, read N- to C-terminus: Small ribosomal subunit protein uS4 (201 aa).

The interval 28-47 is disordered; the sequence is KKNYPPGQHGNSRKRKTSEY. The S4 RNA-binding domain maps to 92 to 155; it reads GRLDNIVFRL…KSLEVIANSL (64 aa).

The protein belongs to the universal ribosomal protein uS4 family. In terms of assembly, part of the 30S ribosomal subunit. Contacts protein S5. The interaction surface between S4 and S5 is involved in control of translational fidelity.

One of the primary rRNA binding proteins, it binds directly to 16S rRNA where it nucleates assembly of the body of the 30S subunit. Its function is as follows. With S5 and S12 plays an important role in translational accuracy. The polypeptide is Small ribosomal subunit protein uS4 (Bacteroides fragilis (strain YCH46)).